The sequence spans 180 residues: Putative peroxiredoxin YkuU (180 aa).

One can recognise a Thioredoxin domain in the interval 4 to 165 (RMVGKQAPRF…TLRVLQALQT (162 aa)). The active-site Cysteine sulfenic acid (-SOH) intermediate is Cys52.

Belongs to the peroxiredoxin family. AhpC/Prx1 subfamily. In terms of assembly, homodimer; disulfide-linked, upon oxidation.

The protein resides in the cytoplasm. The enzyme catalyses a hydroperoxide + [protein]-dithiol = [protein]-disulfide + an alcohol + H2O. Thiol-specific peroxidase that catalyzes the reduction of hydrogen peroxide and organic hydroperoxides to water and alcohols, respectively. Plays a role in cell protection against oxidative stress by detoxifying peroxides. This Bacillus subtilis (strain 168) protein is Putative peroxiredoxin YkuU (ykuU).